Here is a 498-residue protein sequence, read N- to C-terminus: Zinc finger protein 497 (498 aa).

Residues 30–104 (SEGAVSGGWG…LRPSPLPEEP (75 aa)) form a disordered region. C2H2-type zinc fingers lie at residues 106 to 128 (CRCG…RRVH), 134 to 156 (YTCP…QRIH), 162 to 184 (YACR…QETH), 190 to 212 (FRCP…RRTH), 218 to 240 (YECP…RRVH), 246 to 268 (HACR…LKIH), 274 to 296 (HACP…RRTH), 302 to 324 (FPCA…QRTH), 330 to 352 (FECA…RRVH), 358 to 380 (HACA…RRTH), 386 to 408 (FACA…RLSH), 414 to 436 (FACA…QRLH), 442 to 464 (FVCA…RRTH), and 470 to 492 (YACG…QKRH).

Belongs to the krueppel C2H2-type zinc-finger protein family.

It is found in the nucleus. In terms of biological role, may be involved in transcriptional regulation. The polypeptide is Zinc finger protein 497 (ZNF497) (Homo sapiens (Human)).